The sequence spans 290 residues: Probable proteasome subunit beta type-6 (290 aa).

This sequence belongs to the peptidase T1B family. As to quaternary structure, the 26S proteasome consists of a 20S proteasome core and two 19S regulatory subunits. The 20S proteasome core is composed of 28 subunits that are arranged in four stacked rings, resulting in a barrel-shaped structure. The two end rings are each formed by seven alpha subunits, and the two central rings are each formed by seven beta subunits. The catalytic chamber with the active sites is on the inside of the barrel.

The protein resides in the cytoplasm. It localises to the nucleus. Its function is as follows. Non-catalytic component of the proteasome which degrades poly-ubiquitinated proteins in the cytoplasm and in the nucleus. It is essential for the regulated turnover of proteins and for the removal of misfolded proteins. The proteasome is a multicatalytic proteinase complex that is characterized by its ability to cleave peptides with Arg, Phe, Tyr, Leu, and Glu adjacent to the leaving group at neutral or slightly basic pH. It has an ATP-dependent proteolytic activity. This chain is Probable proteasome subunit beta type-6 (PRE7), found in Encephalitozoon cuniculi (strain GB-M1) (Microsporidian parasite).